Reading from the N-terminus, the 998-residue chain is Poly [ADP-ribose] polymerase 1 (998 aa).

PARP-type zinc fingers lie at residues 1-78 (AKSG…ETGG) and 99-189 (FAAE…PAVK). Zn(2+) contacts are provided by Cys-8, Cys-11, His-40, Cys-43, Cys-111, Cys-114, His-145, and Cys-148. A disordered region spans residues 185–211 (LPAVKNEGKRKADEVDGHSAATKKKIK). The span at 190 to 201 (NEGKRKADEVDG) shows a compositional bias: basic and acidic residues. 2 consecutive short sequence motifs (nuclear localization signal) follow at residues 193–195 (KRK) and 207–212 (KKKIKK). Residues 211–345 (KKEKEKESKL…FKRHDRAFPP (135 aa)) form the PADR1 zinc-binding domain. The tract at residues 276–318 (GALLPCEECSGQFVFKGDAYYCTGDLSAWTKCVAKTQTPNRKD) is zinc ribbon. Cys-281, Cys-284, Cys-297, and Cys-307 together coordinate Zn(2+). The span at 348-361 (APTPISPPAAPEPK) shows a compositional bias: pro residues. Positions 348-370 (APTPISPPAAPEPKPTVEETFPE) are disordered. Residues 357-507 (APEPKPTVEE…GSNKSEKKMK (151 aa)) form an automodification domain region. The BRCT domain occupies 369-460 (PEGKPLTNTK…SVQELLSQFG (92 aa)). PolyADP-ribosyl glutamic acid is present on residues Glu-391, Glu-397, Glu-419, Glu-428, Glu-429, Glu-445, Glu-447, Glu-454, Glu-467, Glu-471, Glu-477, Glu-495, Glu-496, and Glu-503. Residues 471–510 (EAVQPTEKQPSSGPVAGKSSGKVKEEKGSNKSEKKMKLTV) are disordered. A compositionally biased stretch (basic and acidic residues) spans 492 to 506 (KVKEEKGSNKSEKKM). Residues 525-621 (SCHVLETGGK…PNFTKYPKKF (97 aa)) form the WGR domain. The region spanning 645 to 762 (KSKLAKPVQE…DIEVAYSLLR (118 aa)) is the PARP alpha-helical domain. The PARP catalytic domain maps to 771 to 997 (DPIDVKYEKI…LKFNYKGGMM (227 aa)). NAD(+)-binding positions include 845–847 (HGS), Gly-854, Arg-861, and Ser-887. The For poly [ADP-ribose] polymerase activity role is filled by Glu-971.

This sequence belongs to the ARTD/PARP family. As to quaternary structure, homodimer; PARP-type zinc-fingers from separate parp1 molecules form a dimer module that specifically recognizes DNA strand breaks. Post-translationally, poly-ADP-ribosylated on serine, glutamate and aspartate residues by autocatalysis. Auto-ADP-ribosylation on serine takes place following interaction with HPF1. Auto poly-ADP-ribosylation on serine residues promotes its dissociation from chromatin.

Its subcellular location is the chromosome. The protein localises to the nucleus. The protein resides in the nucleolus. It is found in the cytoplasm. It localises to the cytosol. It catalyses the reaction NAD(+) + (ADP-D-ribosyl)n-acceptor = nicotinamide + (ADP-D-ribosyl)n+1-acceptor + H(+).. It carries out the reaction L-seryl-[protein] + NAD(+) = O-(ADP-D-ribosyl)-L-seryl-[protein] + nicotinamide + H(+). The catalysed reaction is L-aspartyl-[protein] + NAD(+) = 4-O-(ADP-D-ribosyl)-L-aspartyl-[protein] + nicotinamide. The enzyme catalyses L-glutamyl-[protein] + NAD(+) = 5-O-(ADP-D-ribosyl)-L-glutamyl-[protein] + nicotinamide. It catalyses the reaction L-tyrosyl-[protein] + NAD(+) = O-(ADP-D-ribosyl)-L-tyrosyl-[protein] + nicotinamide + H(+). It carries out the reaction L-histidyl-[protein] + NAD(+) = N(tele)-(ADP-D-ribosyl)-L-histidyl-[protein] + nicotinamide + H(+). Its activity is regulated as follows. ADP-ribosyltransferase activity is regulated via an allosteric activation mechanism. In absence of activation signal, parp1 is autoinhibited by the PARP alpha-helical domain (also named HD region), which prevents effective NAD(+)-binding. Activity is highly stimulated by signals, such as DNA strand breaks. Binding to damaged DNA unfolds the PARP alpha-helical domain, relieving autoinhibition. Poly-ADP-ribosyltransferase activity is tightly regulated and parp1 is removed from damaged chromatin following initial poly-ADP-ribosylation of chromatin to avoid prolonged residence (trapping) that has cytotoxic consequences. A number of factors or post-translational modifications (auto-poly-ADP-ribosylation) promote parp1 removal from chromatin. Its function is as follows. Poly-ADP-ribosyltransferase that mediates poly-ADP-ribosylation of proteins and plays a key role in DNA repair. Mediates glutamate, aspartate, serine, histidine or tyrosine ADP-ribosylation of proteins: the ADP-D-ribosyl group of NAD(+) is transferred to the acceptor carboxyl group of target residues and further ADP-ribosyl groups are transferred to the 2'-position of the terminal adenosine moiety, building up a polymer with an average chain length of 20-30 units. Serine ADP-ribosylation of proteins constitutes the primary form of ADP-ribosylation of proteins in response to DNA damage. Specificity for the different amino acids is conferred by interacting factors, such as hpf1 and nmnat1. Following interaction with hpf1, catalyzes serine ADP-ribosylation of target proteins; hpf1 confers serine specificity by completing the parp1 active site. Also catalyzes tyrosine ADP-ribosylation of target proteins following interaction with hpf1. Following interaction with nmnat1, catalyzes glutamate and aspartate ADP-ribosylation of target proteins; nmnat1 confers glutamate and aspartate specificity. Parp1 initiates the repair of DNA breaks: recognizes and binds DNA breaks within chromatin and recruits hpf1, licensing serine ADP-ribosylation of target proteins, such as histones (H2BS6ADPr and H3S10ADPr), thereby promoting decompaction of chromatin and the recruitment of repair factors leading to the reparation of DNA strand breaks. In addition to base excision repair (BER) pathway, also involved in double-strand breaks (DSBs) repair. Mediates the poly-ADP-ribosylation of a number of proteins. In addition to proteins, also able to ADP-ribosylate DNA: catalyzes ADP-ribosylation of DNA strand break termini containing terminal phosphates and a 2'-OH group in single- and double-stranded DNA, respectively. Parp1-mediated DNA repair in neurons plays a role in sleep: senses DNA damage in neurons and promotes sleep, facilitating efficient DNA repair. In addition to DNA repair, also involved in other processes, such as transcription regulation, programmed cell death, membrane repair, adipogenesis and innate immunity. Acts as a repressor of transcription: binds to nucleosomes and modulates chromatin structure in a manner similar to histone H1, thereby altering RNA polymerase II. Acts both as a positive and negative regulator of transcription elongation, depending on the context. Poly-ADP-ribose chains generated by parp1 also play a role in poly-ADP-ribose-dependent cell death, a process named parthanatos. Also acts as a negative regulator of the cGAS-STING pathway by mediating poly-ADP-ribosylation and inactivation of cgas. Acts as a negative regulator of adipogenesis by catalyzing poly ADP-ribosylation of histone H2B on 'Glu-35' (H2BE35ADPr). This is Poly [ADP-ribose] polymerase 1 (parp1) from Xenopus laevis (African clawed frog).